Reading from the N-terminus, the 252-residue chain is Isoprenyl transferase (252 aa).

Residue D32 is part of the active site. D32 lines the Mg(2+) pocket. Residues 33–36 (GNGR), W37, R45, H49, and 77–79 (STE) each bind substrate. Catalysis depends on N80, which acts as the Proton acceptor. Substrate is bound by residues W81, R83, R200, and 206–208 (RLS). E219 serves as a coordination point for Mg(2+).

This sequence belongs to the UPP synthase family. In terms of assembly, homodimer. It depends on Mg(2+) as a cofactor.

Functionally, catalyzes the condensation of isopentenyl diphosphate (IPP) with allylic pyrophosphates generating different type of terpenoids. The protein is Isoprenyl transferase of Listeria innocua serovar 6a (strain ATCC BAA-680 / CLIP 11262).